Here is a 160-residue protein sequence, read N- to C-terminus: Cyclic pyranopterin monophosphate synthase (160 aa).

Substrate contacts are provided by residues 77–79 (LCH) and 115–116 (ME). The active site involves Asp130.

It belongs to the MoaC family. Homohexamer; trimer of dimers.

It carries out the reaction (8S)-3',8-cyclo-7,8-dihydroguanosine 5'-triphosphate = cyclic pyranopterin phosphate + diphosphate. The protein operates within cofactor biosynthesis; molybdopterin biosynthesis. In terms of biological role, catalyzes the conversion of (8S)-3',8-cyclo-7,8-dihydroguanosine 5'-triphosphate to cyclic pyranopterin monophosphate (cPMP). The polypeptide is Cyclic pyranopterin monophosphate synthase (Parvibaculum lavamentivorans (strain DS-1 / DSM 13023 / NCIMB 13966)).